Consider the following 155-residue polypeptide: Nascent polypeptide-associated complex subunit beta (155 aa).

2 disordered regions span residues 1–39 (MDQAKLARLQQSVRIGTGKGTPRRKTKKVHKSSGTDDKK) and 122–155 (QNMQKKEGEAKKEGEEDDEDIPDLVGETFESKVE). Positions 21 to 31 (TPRRKTKKVHK) are enriched in basic residues. An NAC-A/B domain is found at 34–99 (GTDDKKLQTS…GEEKELTELV (66 aa)). A compositionally biased stretch (basic and acidic residues) spans 125 to 135 (QKKEGEAKKEG).

It belongs to the NAC-beta family. In terms of assembly, part of the nascent polypeptide-associated complex (NAC), consisting of EGD2 and EGD1. NAC associates with ribosomes via EGD1.

It localises to the cytoplasm. It is found in the nucleus. Component of the nascent polypeptide-associated complex (NAC), a dynamic component of the ribosomal exit tunnel, protecting the emerging polypeptides from interaction with other cytoplasmic proteins to ensure appropriate nascent protein targeting. The NAC complex also promotes mitochondrial protein import by enhancing productive ribosome interactions with the outer mitochondrial membrane and blocks the inappropriate interaction of ribosomes translating non-secretory nascent polypeptides with translocation sites in the membrane of the endoplasmic reticulum. EGD1 may act as a transcription factor that exert a negative effect on the expression of several genes that are transcribed by RNA polymerase II. This is Nascent polypeptide-associated complex subunit beta (EGD1) from Coccidioides immitis (strain RS) (Valley fever fungus).